The primary structure comprises 173 residues: T-cell receptor beta-1 chain C region (173 aa).

The tract at residues 1–146 is c region; the sequence is EDLRNVTPPK…GVLSATILYE (146 aa). Residues Cys-31 and Cys-71 are joined by a disulfide bond. Asn-67 and Asn-116 each carry an N-linked (GlcNAc...) asparagine glycan. A helical membrane pass occupies residues 146-167; sequence EILLGKATLYAVLVSTLVVMAM. The Cytoplasmic segment spans residues 168 to 173; sequence VKRKNS.

The protein resides in the membrane. The protein is T-cell receptor beta-1 chain C region of Mus musculus (Mouse).